A 130-amino-acid polypeptide reads, in one-letter code: Small ribosomal subunit protein uS11 (130 aa).

Belongs to the universal ribosomal protein uS11 family. Part of the 30S ribosomal subunit. Interacts with proteins S7 and S18. Binds to IF-3.

In terms of biological role, located on the platform of the 30S subunit, it bridges several disparate RNA helices of the 16S rRNA. Forms part of the Shine-Dalgarno cleft in the 70S ribosome. The polypeptide is Small ribosomal subunit protein uS11 (Rippkaea orientalis (strain PCC 8801 / RF-1) (Cyanothece sp. (strain PCC 8801))).